We begin with the raw amino-acid sequence, 80 residues long: Antitoxin VapB15 (80 aa).

Positions 60–80 are disordered; it reads DFSNDEIESFSDTDRKLADES. Glutamate 67 contacts Mg(2+). Glutamate 67 contacts Mn(2+). The segment covering 71–80 has biased composition (basic and acidic residues); sequence DTDRKLADES.

In terms of assembly, forms a VapB15-VapC15(2) heterotrimer and a VapB15(2)-VapC15(2) heterotetramer; each toxin pair forms a homodimer which creates a channel in which the antitoxin binds. Requires Mg(2+) as cofactor. Mn(2+) is required as a cofactor.

In terms of biological role, antitoxin component of a type II toxin-antitoxin (TA) system. Neutralizes the toxic effect of cognate toxin VapC15. The polypeptide is Antitoxin VapB15 (vapB15) (Mycobacterium tuberculosis (strain CDC 1551 / Oshkosh)).